The chain runs to 183 residues: I-kappa-B like protein N2 (183 aa).

ANK repeat units follow at residues 62–95 (DGNT…DLNL) and 99–129 (CHKP…NLEA). The segment at 163 to 183 (PRQDGSSEDEVSDSEEKSDSE) is disordered.

The protein belongs to the polydnaviridae I-Kappa-B like protein family.

Its function is as follows. Suppresses the host immune response through NF-kappa-B inactivation. Possesses ankyrin repeat domains required for NF-kappa-B binding but lacks the regulatory regions required for dissociation from NF-kappa-B and degradation. Therefore, prevents host NF-kappa-B release and subsequent activation. This is I-kappa-B like protein N2 (N5) from Microplitis demolitor (Parasitoid wasp).